We begin with the raw amino-acid sequence, 87 residues long: Retinal rod rhodopsin-sensitive cGMP 3',5'-cyclic phosphodiesterase subunit gamma (87 aa).

Met1 is modified (N-acetylmethionine). Residues 1–12 (MNLEPPKAEIRS) are compositionally biased toward basic and acidic residues. The segment at 1–55 (MNLEPPKAEIRSATRVMGGPVTPRKGPPKFKQRQTRQFKSKPPKKGVQGFGDDIP) is disordered. Over residues 26 to 44 (GPPKFKQRQTRQFKSKPPK) the composition is skewed to basic residues.

It belongs to the rod/cone cGMP-PDE gamma subunit family. Oligomer composed of two catalytic chains (alpha and beta), an inhibitory chain (gamma) and the delta chain.

It catalyses the reaction 3',5'-cyclic GMP + H2O = GMP + H(+). Functionally, participates in processes of transmission and amplification of the visual signal. cGMP-PDEs are the effector molecules in G-protein-mediated phototransduction in vertebrate rods and cones. This is Retinal rod rhodopsin-sensitive cGMP 3',5'-cyclic phosphodiesterase subunit gamma (PDE6G) from Bos taurus (Bovine).